A 241-amino-acid chain; its full sequence is Triosephosphate isomerase (241 aa).

Residue 9-11 coordinates substrate; that stretch reads NWK. The active-site Electrophile is the histidine 96. Glutamate 165 serves as the catalytic Proton acceptor. Substrate contacts are provided by residues glycine 171, serine 204, and 225-226; that span reads GG.

Belongs to the triosephosphate isomerase family. Homodimer.

It is found in the cytoplasm. The catalysed reaction is D-glyceraldehyde 3-phosphate = dihydroxyacetone phosphate. Its pathway is carbohydrate biosynthesis; gluconeogenesis. It participates in carbohydrate degradation; glycolysis; D-glyceraldehyde 3-phosphate from glycerone phosphate: step 1/1. In terms of biological role, involved in the gluconeogenesis. Catalyzes stereospecifically the conversion of dihydroxyacetone phosphate (DHAP) to D-glyceraldehyde-3-phosphate (G3P). In Acaryochloris marina (strain MBIC 11017), this protein is Triosephosphate isomerase.